The chain runs to 160 residues: Major strawberry allergen Fra a 1-E (160 aa).

Belongs to the BetVI family. In terms of assembly, monomer. Interacts with AP. In terms of tissue distribution, highly expressed in roots. Expressed in open flowers. Expressed at low levels in leaves, flower buds and fruits.

In terms of biological role, involved in the control of flavonoid biosynthesis in fruits, probably by binding directly to natural flavonoids. Binds the natural flavonoid quercetin-3-O-glucuronide with affinities in the low micromolar range. This Fragaria ananassa (Strawberry) protein is Major strawberry allergen Fra a 1-E.